The following is a 471-amino-acid chain: 1,3-beta-glucanosyltransferase GAS4 (471 aa).

The signal sequence occupies residues 1–21; that stretch reads MMVFSSTFIFLILELVVLCEA. A disulfide bond links Cys-70 and Cys-99. Tyr-88 provides a ligand contact to (1,3-beta-D-glucosyl)n. Asn-151 carries an N-linked (GlcNAc...) asparagine glycan. Residues Asn-160, Glu-161, Asp-203, and Arg-208 each contribute to the (1,3-beta-D-glucosyl)n site. The Proton donor role is filled by Glu-161. Intrachain disulfides connect Cys-217/Cys-354 and Cys-238/Cys-269. Residue Glu-266 is the Nucleophile of the active site. Tyr-298 contributes to the (1,3-beta-D-glucosyl)n binding site. An N-linked (GlcNAc...) asparagine glycan is attached at Asn-398. Asn-447 carries the GPI-anchor amidated asparagine lipid modification. Residues 448-471 constitute a propeptide, removed in mature form; sequence SASISGPLLPLGLCLLFFTFSLFF.

This sequence belongs to the glycosyl hydrolase 72 family.

The protein resides in the cell membrane. Functionally, splits internally a 1,3-beta-glucan molecule and transfers the newly generated reducing end (the donor) to the non-reducing end of another 1,3-beta-glucan molecule (the acceptor) forming a 1,3-beta linkage, resulting in the elongation of 1,3-beta-glucan chains in the cell wall. Involved in spore wall assembly. The chain is 1,3-beta-glucanosyltransferase GAS4 (GAS4) from Saccharomyces cerevisiae (strain ATCC 204508 / S288c) (Baker's yeast).